The sequence spans 340 residues: Glycerol-3-phosphate dehydrogenase [NAD(P)+] (340 aa).

NADPH-binding residues include S13, W14, and K108. Sn-glycerol 3-phosphate contacts are provided by K108, G139, and S141. An NADPH-binding site is contributed by A143. Sn-glycerol 3-phosphate-binding residues include K194, D247, S257, R258, and N259. The Proton acceptor role is filled by K194. R258 is an NADPH binding site. NADPH is bound by residues V282 and E284.

This sequence belongs to the NAD-dependent glycerol-3-phosphate dehydrogenase family.

Its subcellular location is the cytoplasm. The catalysed reaction is sn-glycerol 3-phosphate + NAD(+) = dihydroxyacetone phosphate + NADH + H(+). It catalyses the reaction sn-glycerol 3-phosphate + NADP(+) = dihydroxyacetone phosphate + NADPH + H(+). It functions in the pathway membrane lipid metabolism; glycerophospholipid metabolism. Catalyzes the reduction of the glycolytic intermediate dihydroxyacetone phosphate (DHAP) to sn-glycerol 3-phosphate (G3P), the key precursor for phospholipid synthesis. The protein is Glycerol-3-phosphate dehydrogenase [NAD(P)+] of Streptococcus thermophilus (strain ATCC BAA-491 / LMD-9).